The sequence spans 411 residues: Heparan-sulfate 6-O-sulfotransferase 1 (411 aa).

The Cytoplasmic portion of the chain corresponds to 11–17 (MVERASK). A helical; Signal-anchor for type II membrane protein membrane pass occupies residues 18 to 37 (FVLVVAGSVCFMLILYQYAG). Over 38 to 411 (PGLSLGAPGG…DYMSHIIEKW (374 aa)) the chain is Lumenal. 93–101 (HIQKTGGTT) provides a ligand contact to 3'-phosphoadenylyl sulfate. Substrate-binding positions include 123-124 (KK), arginine 140, tryptophan 145, and histidine 150. The Proton acceptor role is filled by histidine 150. 2 residues coordinate 3'-phosphoadenylyl sulfate: arginine 185 and serine 193. 2 residues coordinate substrate: histidine 197 and tryptophan 204. Asparagine 264 carries N-linked (GlcNAc...) asparagine glycosylation. 317 to 319 (MQY) contributes to the 3'-phosphoadenylyl sulfate binding site. The N-linked (GlcNAc...) asparagine glycan is linked to asparagine 320. 323-324 (RA) contributes to the 3'-phosphoadenylyl sulfate binding site. Positions 352 to 387 (KDLFQQRYQYKRQLERREQRLRSREERLLHRAKEAL) form a coiled coil.

The protein belongs to the sulfotransferase 6 family. In terms of processing, N-glycosylated. As to expression, expressed in fetal brain.

It localises to the membrane. The catalysed reaction is alpha-D-glucosaminyl-[heparan sulfate](n) + 3'-phosphoadenylyl sulfate = 6-sulfo-alpha-D-glucosaminyl-[heparan sulfate](n) + adenosine 3',5'-bisphosphate + H(+). Its function is as follows. 6-O-sulfation enzyme which catalyzes the transfer of sulfate from 3'-phosphoadenosine 5'-phosphosulfate (PAPS) to position 6 of the N-sulfoglucosamine residue (GlcNS) of heparan sulfate. Critical for normal neuronal development where it may play a role in neuron branching. May also play a role in limb development. May prefer iduronic acid. The chain is Heparan-sulfate 6-O-sulfotransferase 1 from Homo sapiens (Human).